A 982-amino-acid polypeptide reads, in one-letter code: Serine/threonine-protein kinase SULU (982 aa).

Residues 30–289 (YQDLREIGHG…AEECFRHPFI (260 aa)) enclose the Protein kinase domain. ATP is bound by residues 36–44 (IGHGSFGAV) and Lys-59. Asp-153 acts as the Proton acceptor in catalysis. Disordered regions lie at residues 331 to 484 (GKEG…PLDT), 592 to 620 (QNNE…QNQQ), 751 to 789 (LETQ…RDLK), and 957 to 982 (RTGS…QMAM). The segment covering 353–373 (SIGRAGDSASSRSASLTSFRS) has biased composition (low complexity). The segment covering 421 to 431 (QMLSSTSTSGV) has biased composition (polar residues). A compositionally biased stretch (low complexity) spans 459–472 (IPTSQPTSKSESSS). Residues 595–608 (ELDKRKKDIEDGEK) show a composition bias toward basic and acidic residues. Over residues 759-768 (SASQNEYTQR) the composition is skewed to polar residues. Residues 957 to 967 (RTGSTSRSSGG) are compositionally biased toward low complexity. Positions 973 to 982 (GNSSSIQMAM) are enriched in polar residues.

It belongs to the protein kinase superfamily. Ser/Thr protein kinase family. STE20 subfamily. Requires Mg(2+) as cofactor. As to expression, expressed in the pharynx, including the pharyngeal muscle of the metacorpus, the isthmus, and the terminal bulb; in the intestine, including the pharyngeointestinal valve between the pharynx and the intestine, a structure near the anus likely to be the anal sphincter and the excretory cell and in several ring neurons.

Its subcellular location is the cytoplasm. The protein resides in the cytoskeleton. It localises to the cell cortex. It carries out the reaction L-seryl-[protein] + ATP = O-phospho-L-seryl-[protein] + ADP + H(+). The catalysed reaction is L-threonyl-[protein] + ATP = O-phospho-L-threonyl-[protein] + ADP + H(+). Acts as a negative regulator of cortical contractions during early embryonic cell division, possibly by regulating rho-1-dependent actomyosin contractility. Plays a role in polarity establishment in early embryos by regulating the size of the anterior and posterior cortex in the first asymmetric cell division. Might play a role in cell cycle progression. In the germline, involved in the regulation of meiotic progression during oogenesis, possibly by modulating the timing of mpk-1 activation. Plays a role in meiotic recombination events. Involved in pharyngeal pumping. In Caenorhabditis elegans, this protein is Serine/threonine-protein kinase SULU (kin-18).